Consider the following 131-residue polypeptide: UPF0134 protein MPN_010 (131 aa).

Belongs to the UPF0134 family.

This is UPF0134 protein MPN_010 from Mycoplasma pneumoniae (strain ATCC 29342 / M129 / Subtype 1) (Mycoplasmoides pneumoniae).